Consider the following 645-residue polypeptide: DEAD-box ATP-dependent RNA helicase 46 (645 aa).

Disordered stretches follow at residues 1–22 and 44–137; these read MAATASAIRYAPEDPNLPKPWK and YERP…AGNE. One can recognise a WW domain in the interval 15–49; the sequence is PNLPKPWKGLVDSRTGYLYFWNPETNVTQYERPAS. A compositionally biased stretch (low complexity) spans 60-72; that stretch reads VSSSVQTNQQSSS. Residues 77–91 are compositionally biased toward basic and acidic residues; sequence GKEDDKYGRGSDGPK. Low complexity predominate over residues 108 to 136; sequence SSNDAASGLGNASSGGSSARGPPSSAAGN. A Q motif motif is present at residues 161–189; that stretch reads MSFEATGLPNELLREVYSAGFSAPSPIQA. The Helicase ATP-binding domain occupies 192 to 366; it reads WPIAMQNRDI…ADLLVNPAQV (175 aa). 205-212 provides a ligand contact to ATP; that stretch reads AKTGSGKT. The short motif at 314–317 is the DEAD box element; the sequence is DEAD. The Helicase C-terminal domain maps to 395-539; sequence RLEQILRSQE…KVPPQVREMA (145 aa). The disordered stretch occupies residues 532-645; sequence PPQVREMATR…FHEAMMMKNR (114 aa). Positions 556 to 597 are enriched in gly residues; that stretch reads SSGGGGGRGGYGDSGYGGRGESGYGSRGDSGYGGRGDSGGRG. The span at 598–608 shows a compositional bias: low complexity; the sequence is SWAPSRDSSGS. Residues 612–623 are compositionally biased toward basic and acidic residues; the sequence is GRERSRSPERFR. A compositionally biased stretch (low complexity) spans 624-634; that stretch reads GGPPSTSSPPR.

The protein belongs to the DEAD box helicase family. DDX5/DBP2 subfamily.

The enzyme catalyses ATP + H2O = ADP + phosphate + H(+). In Arabidopsis thaliana (Mouse-ear cress), this protein is DEAD-box ATP-dependent RNA helicase 46 (RH46).